The sequence spans 983 residues: Seizure protein 6 homolog (983 aa).

The N-terminal stretch at 1–19 (MRPAALLLLPSLLALLVHG) is a signal peptide. Disordered regions lie at residues 80 to 132 (GQEK…WSLE) and 148 to 194 (PGMA…QTTG). Over residues 101–112 (NQDSRPVFTSPT) the composition is skewed to polar residues. A compositionally biased stretch (pro residues) spans 154 to 167 (TPGPGERPNTPPPS). Residue N278 is glycosylated (N-linked (GlcNAc...) asparagine). The region spanning 344–403 (LSCHFPRRPAYGAVTVTSLHPGGSARFRCATGYQLKGARLLTCLNATQPFWDSQEPVCIA) is the Sushi 1 domain. 12 disulfides stabilise this stretch: C346-C386, C372-C401, C405-C432, C521-C563, C548-C578, C582-C608, C699-C741, C727-C754, C760-C802, C788-C819, C827-C869, and C855-C884. 3 N-linked (GlcNAc...) asparagine glycosylation sites follow: N388, N425, and N530. The CUB 1 domain occupies 405–516 (CGGVIRNATT…AGMALRYEAF (112 aa)). The region spanning 519 to 580 (GHCYEPFVKY…WNETEPACRA (62 aa)) is the Sushi 2 domain. The 112-residue stretch at 582 to 693 (CSGETTDSAG…QGFVIHFFEV (112 aa)) folds into the CUB 2 domain. 3 Sushi domains span residues 697 to 756 (DTCP…SCQR), 758 to 821 (TSCL…KCLL), and 825 to 886 (KPCH…ICRA). The chain crosses the membrane as a helical span at residues 915–935 (LAAAIFLPLVAMALLVGGVYL).

It belongs to the SEZ6 family.

It localises to the cell membrane. Its function is as follows. May play a role in cell-cell recognition and in neuronal membrane signaling. Seems to be important for the achievement of the necessary balance between dendrite elongation and branching during the elaboration of a complex dendritic arbor. Involved in the development of appropriate excitatory synaptic connectivity. The chain is Seizure protein 6 homolog (SEZ6) from Bos taurus (Bovine).